The chain runs to 518 residues: Centromere protein T (518 aa).

A disordered region spans residues 1–70 (MADLSSPDGD…RKHSHGTGSV (70 aa)). Residues 19 to 28 (HVLDTADSHT) are compositionally biased toward basic and acidic residues. Residues 34–57 (STQTNPQRRRSQTPYSKRQGSQRK) are compositionally biased toward polar residues. Phosphothreonine is present on T86. The segment at 94–381 (ILLTAPESST…EPHQLFEPPP (288 aa)) is flexible stalk domain. 3 disordered regions span residues 102 to 156 (STVM…KRKQ), 271 to 362 (VHHS…ELSS), and 375 to 412 (QLFE…HQDP). Residues 294-306 (TPSTGTRPQSQMS) are compositionally biased toward polar residues. Phosphoserine occurs at positions 313, 324, 333, 345, 346, 357, and 382. Basic and acidic residues predominate over residues 326–343 (ELREAVGSKEAEEPKDLE). The segment covering 384–395 (GVAAVSSESVPA) has biased composition (low complexity).

The protein belongs to the CENP-T/CNN1 family. Component of the CENPA-CAD complex, composed of CENPI, CENPK, CENPL, CENPO, CENPP, CENPQ, CENPR and CENPS. The CENPA-CAD complex is probably recruited on centromeres by the CENPA-NAC complex, at least composed of CENPA, CENPC, CENPH, CENPM, CENPN, CENPT and CENPU. Identified in a centromeric complex containing histones H2A, H2B, H3 and H4, and at least CENPA, CENPB, CENPC, CENPT, CENPN, HJURP, SUPT16H, SSRP1 and RSF1. Interacts (via N-terminus) with the NDC80 complex. Heterodimer with CENPW; this dimer coassembles with CENPS-CENPX heterodimers at centromeres to form the tetrameric CENP-T-W-S-X complex. In terms of processing, dynamically phosphorylated during the cell cycle. Phosphorylated during G2 phase, metaphase and anaphase, but not during telophase or G1 phase.

It localises to the nucleus. The protein localises to the chromosome. Its subcellular location is the centromere. The protein resides in the kinetochore. Functionally, component of the CENPA-NAC (nucleosome-associated) complex, a complex that plays a central role in assembly of kinetochore proteins, mitotic progression and chromosome segregation. The CENPA-NAC complex recruits the CENPA-CAD (nucleosome distal) complex and may be involved in incorporation of newly synthesized CENPA into centromeres. Part of a nucleosome-associated complex that binds specifically to histone H3-containing nucleosomes at the centromere, as opposed to nucleosomes containing CENPA. Component of the heterotetrameric CENP-T-W-S-X complex that binds and supercoils DNA, and plays an important role in kinetochore assembly. CENPT has a fundamental role in kinetochore assembly and function. It is one of the inner kinetochore proteins, with most further proteins binding downstream. Required for normal chromosome organization and normal progress through mitosis. The protein is Centromere protein T (Cenpt) of Rattus norvegicus (Rat).